Consider the following 467-residue polypeptide: Iroquois-class homeodomain protein irx-1-A (467 aa).

The segment at residues 126–188 is a DNA-binding region (homeobox; TALE-type); sequence DPGRPKNATR…NARRRLKKEN (63 aa). Disordered regions lie at residues 197-306, 318-344, and 410-467; these read KEDD…PPHS, TSPDGALKSSPPPSQGNHTSPPIQHPA, and SLSS…LPSA. Acidic residues-rich tracts occupy residues 215–225 and 233–244; these read EDDEEIDLESI and NDGEQSNEEEDE. Residues 245–262 are compositionally biased toward basic and acidic residues; sequence KLEHLRQGEKESLKKESE. Residues 415-431 show a composition bias toward basic and acidic residues; that stretch reads KTPERTSPKHSDRENVP. A compositionally biased stretch (polar residues) spans 447-460; the sequence is RENTLSQQEGTSRI.

The protein belongs to the TALE/IRO homeobox family. As to expression, expressed early in neural differentiation in the neural plate, and expression continues in the neural tube after neural fold closure. Expressed in the presumptive midbrain territory. Also expressed in the prospective neural crest and the preplacodal field, anterior to the neural plate. Strongly expressed in the profundal placode and weakly expressed in the trigeminal placode. Also expressed in the mesoderm in the Spemann organizer from the start of gastrulation, and subsequently in its derivatives; namely in the notochord as well as in the somites of stage 25 embryos, and the somites and notochord of tailbud embryos. Also expressed in specific and overlapping dynamic patterns with irx2 and irx3 during pronephric kidney development. Renal expression begins in the dorsal region of the pronephric anlage at mid neurula stage and continues to at least tailbud stages where expression is confined to the intermediate tubule segment IT1. Renal expression is maintained at tadpole stages.

It localises to the nucleus. Functionally, acts partially redundantly with other irx members in neural patterning. Required for formation of the posterior forebrain, midbrain, hindbrain, and to a lesser extent, spinal cord. Acts early in neural plate development to induce expression of some but not all proneural genes, and specify a neural precursor state. Also up-regulates repressors that prevent neuronal differentiation. Patterns the neuroectoderm in both the anterior/posterior and dorsal/ventral axes. Acts primarily as a transcriptional repressor during neural development, and binds to the bmp4 promoter to repress gene expression and thus mediate down-regulation of bmp4 by wnt signaling. Controls multiple processes through bmp4-repression including neural plate development, neural crest specification and Spemann organizer development. Involved in the specification of the preplacodal field at the anterior border of the neural plate. Regulates the genetic cascade of interactions that are necessary for positioning the isthmus organizer and the formation of the midbrain-hindbrain boundary. Required during at least two stages of pronephros kidney development; during neurula stages, maintains transcription of key renal genes to define the size and identity of the pronephric anlage, probably in part through regulation of bmp-signaling. Subsequently required for proper formation of the intermediate tubule segment of the pronephros. Acts principally as a transcriptional activator during pronephros development. This is Iroquois-class homeodomain protein irx-1-A (irx1-a) from Xenopus laevis (African clawed frog).